Reading from the N-terminus, the 466-residue chain is Asparagine--tRNA ligase (466 aa).

The protein belongs to the class-II aminoacyl-tRNA synthetase family. In terms of assembly, homodimer.

Its subcellular location is the cytoplasm. It catalyses the reaction tRNA(Asn) + L-asparagine + ATP = L-asparaginyl-tRNA(Asn) + AMP + diphosphate + H(+). The chain is Asparagine--tRNA ligase from Wigglesworthia glossinidia brevipalpis.